Reading from the N-terminus, the 150-residue chain is T-complex protein 1 subunit beta (150 aa).

Aspartate 35 is a Mg(2+) binding site. ADP is bound by residues glycine 36, threonine 37, threonine 38, and serine 39. Positions 36, 37, and 38 each coordinate ATP.

The protein belongs to the TCP-1 chaperonin family. In terms of assembly, component of the chaperonin-containing T-complex (TRiC), a hexadecamer composed of two identical back-to-back stacked rings enclosing a protein folding chamber. Each ring is made up of eight different subunits: TCP1/CCT1, CCT2, CCT3, CCT4, CCT5, CCT6A/CCT6, CCT7, CCT8. Interacts with PACRG. Interacts with FLCN. Interacts with DLEC1. Interacts with SVEP1.

It is found in the cytoplasm. It carries out the reaction ATP + H2O = ADP + phosphate + H(+). Functionally, component of the chaperonin-containing T-complex (TRiC), a molecular chaperone complex that assists the folding of actin, tubulin and other proteins upon ATP hydrolysis. The TRiC complex mediates the folding of WRAP53/TCAB1, thereby regulating telomere maintenance. As part of the TRiC complex may play a role in the assembly of BBSome, a complex involved in ciliogenesis regulating transports vesicles to the cilia. In Mesocricetus auratus (Golden hamster), this protein is T-complex protein 1 subunit beta.